Here is a 294-residue protein sequence, read N- to C-terminus: Nucleotide-binding protein Smlt1108 (294 aa).

16-23 (GLSGSGKS) lines the ATP pocket. Position 69–72 (69–72 (DVRG)) interacts with GTP.

The protein belongs to the RapZ-like family.

Its function is as follows. Displays ATPase and GTPase activities. The protein is Nucleotide-binding protein Smlt1108 of Stenotrophomonas maltophilia (strain K279a).